The sequence spans 704 residues: Preterpestacin I synthase tpcA (704 aa).

The tract at residues 1-329 (MEQLSYQSKL…CSACPRQNAW (329 aa)) is terpene cyclase. Mg(2+) is bound at residue D96. Substrate is bound by residues D96, N231, 235 to 239 (SWERE), and 325 to 326 (RQ). The DDXXD 1 signature appears at 96-100 (DDGGE). The NSE/DTE signature appears at 231 to 239 (NDYFSWERE). A prenyltransferase region spans residues 330–688 (KDMSSQSLNG…MLRLCLAKLS (359 aa)). Positions 361–380 (KDSSFFGSQPSDDEPSLSEV) are disordered. Isopentenyl diphosphate-binding residues include K406, R409, and H438. The Mg(2+) site is built by D445 and D449. Residues 445 to 449 (DDLED) carry the DDXXD 2 motif. A dimethylallyl diphosphate-binding site is contributed by R454. Isopentenyl diphosphate is bound at residue R455. Residues K532, T533, Q568, N575, K583, and K593 each contribute to the dimethylallyl diphosphate site.

In the N-terminal section; belongs to the terpene synthase family. The protein in the C-terminal section; belongs to the FPP/GGPP synthase family. As to quaternary structure, hexamer. Requires Mg(2+) as cofactor.

The catalysed reaction is isopentenyl diphosphate + (2E,6E)-farnesyl diphosphate = (2E,6E,10E)-geranylgeranyl diphosphate + diphosphate. It catalyses the reaction isopentenyl diphosphate + (2E,6E,10E)-geranylgeranyl diphosphate = (2E,6E,10E,14E)-geranylfarnesyl diphosphate + diphosphate. Its pathway is secondary metabolite biosynthesis; terpenoid biosynthesis. In terms of biological role, bifunctional terpene synthase; part of the gene cluster that mediates the biosynthesis of terpestacin. The bifunctional terpene synthase tpcA converts isopentenyl diphosphate (IPP) and dimethylallyl diphosphate (DMAPP) into the sesterterpene preterpestacin I. The C-terminal prenyltransferase (PT) domain of tpcA catalyzes formation of GFPP, whereas the N-terminal terpene cyclase (TC) domain catalyzes the cyclization of GFPP into preterpestacin I. The cytochrome P450 monooxygenase tpcB then hydroxylates preterpestacin I to yield 24-hydroxypreterpstacin I (renamed as preterpestacin II) whereas the cytochrome P450 monooxygenase tpcC further hydroxylates preterpestacin II to yield 16,17-dihydroxypreterpestacin II (renamed as preterpestacin III). Finally, the FAD-dependent monooxygenase tpcD converts preterpestacin III into terpestacin. The protein is Preterpestacin I synthase tpcA of Cochliobolus heterostrophus (strain C5 / ATCC 48332 / race O) (Southern corn leaf blight fungus).